Consider the following 325-residue polypeptide: MSSPVISPETKTGKKILLAAPRGYCAGVDRAVETVERALEEYGAPIYVRKEIVHNRYVVDTLAEKGAIFVNEASEAPEGANMVFSAHGVSPMVHEEAAAKNIKAIDAACPLVTKVHKEVQRFDKQGFHILFIGHEGHEEVEGTMGHSVEKTHLVDGVAGIATLPEFLNDEPNLIWLSQTTLSVDETMEIVRELKVKFPQLQDPPSDDICYATQNRQVAVKAIAERCELMIVVGSRNSSNSVRLVEVAKQNGADNAYLVDYAREIDPAWFEGVETIGISSGASVPEILVQGVIERLAEFGYDDVEEVTSAAEKIVFALPRVLRHKN.

[4Fe-4S] cluster is bound at residue C25. (2E)-4-hydroxy-3-methylbut-2-enyl diphosphate contacts are provided by H54 and H87. Residues H54 and H87 each contribute to the dimethylallyl diphosphate site. Residues H54 and H87 each contribute to the isopentenyl diphosphate site. Position 109 (C109) interacts with [4Fe-4S] cluster. Position 137 (H137) interacts with (2E)-4-hydroxy-3-methylbut-2-enyl diphosphate. H137 lines the dimethylallyl diphosphate pocket. H137 is an isopentenyl diphosphate binding site. The active-site Proton donor is the E139. T179 contributes to the (2E)-4-hydroxy-3-methylbut-2-enyl diphosphate binding site. A [4Fe-4S] cluster-binding site is contributed by C209. (2E)-4-hydroxy-3-methylbut-2-enyl diphosphate is bound by residues S237, S238, N239, and S282. The dimethylallyl diphosphate site is built by S237, S238, N239, and S282. Residues S237, S238, N239, and S282 each contribute to the isopentenyl diphosphate site.

Belongs to the IspH family. Requires [4Fe-4S] cluster as cofactor.

It catalyses the reaction isopentenyl diphosphate + 2 oxidized [2Fe-2S]-[ferredoxin] + H2O = (2E)-4-hydroxy-3-methylbut-2-enyl diphosphate + 2 reduced [2Fe-2S]-[ferredoxin] + 2 H(+). The enzyme catalyses dimethylallyl diphosphate + 2 oxidized [2Fe-2S]-[ferredoxin] + H2O = (2E)-4-hydroxy-3-methylbut-2-enyl diphosphate + 2 reduced [2Fe-2S]-[ferredoxin] + 2 H(+). Its pathway is isoprenoid biosynthesis; dimethylallyl diphosphate biosynthesis; dimethylallyl diphosphate from (2E)-4-hydroxy-3-methylbutenyl diphosphate: step 1/1. It functions in the pathway isoprenoid biosynthesis; isopentenyl diphosphate biosynthesis via DXP pathway; isopentenyl diphosphate from 1-deoxy-D-xylulose 5-phosphate: step 6/6. Functionally, catalyzes the conversion of 1-hydroxy-2-methyl-2-(E)-butenyl 4-diphosphate (HMBPP) into a mixture of isopentenyl diphosphate (IPP) and dimethylallyl diphosphate (DMAPP). Acts in the terminal step of the DOXP/MEP pathway for isoprenoid precursor biosynthesis. The protein is 4-hydroxy-3-methylbut-2-enyl diphosphate reductase of Corynebacterium glutamicum (strain ATCC 13032 / DSM 20300 / JCM 1318 / BCRC 11384 / CCUG 27702 / LMG 3730 / NBRC 12168 / NCIMB 10025 / NRRL B-2784 / 534).